A 390-amino-acid polypeptide reads, in one-letter code: Homeobox protein Meis1 (390 aa).

One can recognise an MEIS N-terminal domain in the interval 108 to 192 (GGDVCSSESF…IDLVIDDREG (85 aa)). Basic and acidic residues predominate over residues 190-202 (REGGSKSDSEDIT). Residues 190–279 (REGGSKSDSE…KKRHKKRGIF (90 aa)) are disordered. The segment covering 203–213 (RSANLTDQPSW) has biased composition (polar residues). Positions 272-334 (RHKKRGIFPK…NARRRIVQPM (63 aa)) form a DNA-binding region, homeobox; TALE-type. Positions 299 to 329 (YPSEEQKKQLAQDTGLTILQVNNWFINARRR) are interaction with DNA. The interval 335 to 390 (IDQSNRAVSQGTPYNPDGQPMGGFVMDGQQHMGIRAPGPMSGMGMNMGMEGQWHYM) is required for transcriptional activation.

Belongs to the TALE/MEIS homeobox family. In terms of assembly, interacts with the N-terminal region of PBX1 to form a heterodimer which binds DNA including a cAMP-responsive sequence in CYP17. Also forms heterodimers with PBX2. Forms heterotrimers with PBX1 or PBX2 and a number of HOX proteins including HOXA9, HOXD4 and HOXD9 where it acts as a non-DNA-binding partner. Also forms heterotrimers with PBX1 and HOX proteins including HOXD9 and HOXD10 where PBX1 is the non-DNA-binding partner. Heterodimer with DLX3. Heterodimer with HOXB13. In terms of tissue distribution, expressed at low level in normal immunohepatopoietic tissues, including the fetal liver. Expressed in a subset of myeloid leukemia cell lines, with the highest expression seen in those with a megakaryocytic-erythroid phenotype. Also expressed at high levels in the cerebellum.

It is found in the nucleus. Functionally, acts as a transcriptional regulator of PAX6. Acts as a transcriptional activator of PF4 in complex with PBX1 or PBX2. Required for hematopoiesis, megakaryocyte lineage development and vascular patterning. May function as a cofactor for HOXA7 and HOXA9 in the induction of myeloid leukemias. The chain is Homeobox protein Meis1 (MEIS1) from Homo sapiens (Human).